Reading from the N-terminus, the 612-residue chain is Large ribosomal subunit assembly factor BipA (612 aa).

The tr-type G domain maps to 5 to 200 (NDLRNIAIIA…TIIKHVPAPV (196 aa)). GTP contacts are provided by residues 17–22 (DHGKTT) and 130–133 (NKID).

Belongs to the TRAFAC class translation factor GTPase superfamily. Classic translation factor GTPase family. BipA subfamily. As to quaternary structure, monomer.

It localises to the cytoplasm. It catalyses the reaction GTP + H2O = GDP + phosphate + H(+). In terms of biological role, a 50S ribosomal subunit assembly protein with GTPase activity, required for 50S subunit assembly at low temperatures, may also play a role in translation. Binds GTP and analogs. Binds the 70S ribosome between the 30S and 50S subunits, in a similar position as ribosome-bound EF-G; it contacts a number of ribosomal proteins, both rRNAs and the A-site tRNA. This Bacillus subtilis (strain 168) protein is Large ribosomal subunit assembly factor BipA.